The sequence spans 178 residues: Deoxycytidylate deaminase (178 aa).

Residues 14 to 145 (EWPEYFMAVA…EETTAARLLF (132 aa)) form the CMP/dCMP-type deaminase domain. Histidine 84 contacts Zn(2+). The active-site Proton donor is glutamate 86. Positions 110 and 113 each coordinate Zn(2+). Serine 174 bears the Phosphoserine mark.

The protein belongs to the cytidine and deoxycytidylate deaminase family. Homohexamer. The cofactor is Zn(2+).

It carries out the reaction dCMP + H2O + H(+) = dUMP + NH4(+). It catalyses the reaction 5-hydroxymethyl-dCMP + H2O + H(+) = 5-hydroxymethyl-dUMP + NH4(+). Its activity is regulated as follows. Allosteric enzyme whose activity is greatly influenced by the end products of its metabolic pathway, dCTP and dTTP. Functionally, catalyzes the deamination of dCMP to dUMP, providing the nucleoside monophosphate substrate for the thymidylate synthase/TYMS. Also, part of a nucleotide salvage pathway that eliminates epigenetically modified 5-hydroxymethyl-dCMP (hmdCMP) in a two-step process entailing deamination to cytotoxic 5-hydroxymethyl-dUMP (hmdUMP), followed by its hydrolysis into 5-hydroxymethyluracil (hmU) and 2-deoxy-D-ribose 5-phosphate (deoxyribosephosphate). Catalyzes the first step in that pathway, the deamination of 5-hydroxymethyl-dCMP (hmdCMP). The protein is Deoxycytidylate deaminase of Mus musculus (Mouse).